The chain runs to 267 residues: Glucosamine-6-phosphate deaminase (267 aa).

The Proton acceptor; for enolization step role is filled by D71. Residue D140 is the For ring-opening step of the active site. H142 functions as the Proton acceptor; for ring-opening step in the catalytic mechanism. E147 acts as the For ring-opening step in catalysis.

Belongs to the glucosamine/galactosamine-6-phosphate isomerase family. Homohexamer.

The protein resides in the cytoplasm. The catalysed reaction is alpha-D-glucosamine 6-phosphate + H2O = beta-D-fructose 6-phosphate + NH4(+). Its pathway is nucleotide-sugar biosynthesis; UDP-N-acetyl-alpha-D-glucosamine biosynthesis; alpha-D-glucosamine 6-phosphate from D-fructose 6-phosphate: step 1/1. Catalyzes the reversible conversion of alpha-D-glucosamine 6-phosphate (GlcN-6P) into beta-D-fructose 6-phosphate (Fru-6P) and ammonium ion, a regulatory reaction step in de novo uridine diphosphate-N-acetyl-alpha-D-glucosamine (UDP-GlcNAc) biosynthesis via hexosamine pathway. This chain is Glucosamine-6-phosphate deaminase, found in Caenorhabditis elegans.